The chain runs to 706 residues: DNA ligase (706 aa).

Residues 48–52 (DAAYD), 97–98 (SL), and Glu-131 contribute to the NAD(+) site. Lys-133 functions as the N6-AMP-lysine intermediate in the catalytic mechanism. NAD(+) is bound by residues Arg-154, Glu-191, Lys-307, and Lys-331. Residues Cys-425, Cys-428, Cys-443, and Cys-449 each contribute to the Zn(2+) site. Residues 628–706 (RADSAVAGKT…EDEWLKLIEG (79 aa)) form the BRCT domain.

It belongs to the NAD-dependent DNA ligase family. LigA subfamily. Mg(2+) is required as a cofactor. It depends on Mn(2+) as a cofactor.

It carries out the reaction NAD(+) + (deoxyribonucleotide)n-3'-hydroxyl + 5'-phospho-(deoxyribonucleotide)m = (deoxyribonucleotide)n+m + AMP + beta-nicotinamide D-nucleotide.. In terms of biological role, DNA ligase that catalyzes the formation of phosphodiester linkages between 5'-phosphoryl and 3'-hydroxyl groups in double-stranded DNA using NAD as a coenzyme and as the energy source for the reaction. It is essential for DNA replication and repair of damaged DNA. This is DNA ligase from Afipia carboxidovorans (strain ATCC 49405 / DSM 1227 / KCTC 32145 / OM5) (Oligotropha carboxidovorans).